The following is a 130-amino-acid chain: Small ribosomal subunit protein uS11c (130 aa).

It belongs to the universal ribosomal protein uS11 family. As to quaternary structure, part of the 30S ribosomal subunit.

The protein resides in the plastid. It localises to the chloroplast. This chain is Small ribosomal subunit protein uS11c, found in Drimys granadensis.